Consider the following 206-residue polypeptide: dITP/XTP pyrophosphatase (206 aa).

Position 7–12 (7–12 (SSHGYK)) interacts with substrate. Asp70 (proton acceptor) is an active-site residue. Asp70 contacts Mg(2+). Residues Thr71, 154 to 157 (FGYD), Lys177, and 182 to 183 (HR) each bind substrate.

It belongs to the HAM1 NTPase family. Homodimer. Mg(2+) is required as a cofactor.

It catalyses the reaction XTP + H2O = XMP + diphosphate + H(+). The enzyme catalyses dITP + H2O = dIMP + diphosphate + H(+). It carries out the reaction ITP + H2O = IMP + diphosphate + H(+). Pyrophosphatase that catalyzes the hydrolysis of nucleoside triphosphates to their monophosphate derivatives, with a high preference for the non-canonical purine nucleotides XTP (xanthosine triphosphate), dITP (deoxyinosine triphosphate) and ITP. Seems to function as a house-cleaning enzyme that removes non-canonical purine nucleotides from the nucleotide pool, thus preventing their incorporation into DNA/RNA and avoiding chromosomal lesions. The polypeptide is dITP/XTP pyrophosphatase (Chlamydia pneumoniae (Chlamydophila pneumoniae)).